The sequence spans 285 residues: RNA 5'-monophosphate methyltransferase (285 aa).

Residues R46, N77, D111, 136–137 (DI), and M165 contribute to the S-adenosyl-L-methionine site. A Bin3-type SAM domain is found at 53 to 275 (ELLRQLFPPE…KHTHETQAIP (223 aa)).

This sequence belongs to the methyltransferase superfamily. In terms of assembly, interacts with DICER1; the interaction may be mediated by RNA.

Its subcellular location is the cytoplasm. It catalyses the reaction a 5'-end 5'-phospho-ribonucleoside-RNA + S-adenosyl-L-methionine = a 5'-end (5'-methylphospho)-ribonucleoside-RNA + S-adenosyl-L-homocysteine. The catalysed reaction is a 5'-end 5'-phospho-ribonucleoside-RNA + 2 S-adenosyl-L-methionine = a 5'-end (5'-bismethylphospho)-ribonucleoside-RNA + 2 S-adenosyl-L-homocysteine. Functionally, O-methyltransferase that specifically monomethylates 5'-monophosphate of cytoplasmic histidyl tRNA (tRNA(His)), acting as a capping enzyme by protecting tRNA(His) from cleavage by DICER1. Also able, with less efficiently, to methylate the 5' monophosphate of a subset of pre-miRNAs, acting as a negative regulator of miRNA processing. The 5' monophosphate of pre-miRNAs is recognized by DICER1 and is required for pre-miRNAs processing: methylation at this position reduces the processing of pre-miRNAs by DICER1. Was also reported to mediate dimethylation of pre-miR-145; however dimethylation cannot be reproduced by another group which observes a monomethylation of pre-miR-145. The chain is RNA 5'-monophosphate methyltransferase from Mus musculus (Mouse).